Here is a 218-residue protein sequence, read N- to C-terminus: Adenylate kinase (218 aa).

14–19 provides a ligand contact to ATP; it reads GAGKGT. The segment at 34-63 is NMP; it reads STGDMFRAAIKAGTELGKQAKALMDEGKLV. AMP contacts are provided by residues threonine 35, arginine 40, 61-63, 89-92, and glutamine 96; these read KLV and GFPR. The segment at 126–163 is LID; it reads GRRVHQASGRSYHIVYNPPKVEGKDDVTGEDLIIRADD. Residues arginine 127 and 136–137 each bind ATP; that span reads SY. Residues arginine 160 and arginine 171 each contribute to the AMP site. Lysine 204 provides a ligand contact to ATP.

The protein belongs to the adenylate kinase family. Monomer.

It is found in the cytoplasm. The enzyme catalyses AMP + ATP = 2 ADP. It participates in purine metabolism; AMP biosynthesis via salvage pathway; AMP from ADP: step 1/1. Functionally, catalyzes the reversible transfer of the terminal phosphate group between ATP and AMP. Plays an important role in cellular energy homeostasis and in adenine nucleotide metabolism. In Mannheimia succiniciproducens (strain KCTC 0769BP / MBEL55E), this protein is Adenylate kinase.